We begin with the raw amino-acid sequence, 464 residues long: Chromosomal replication initiator protein DnaA (464 aa).

The tract at residues 1-90 (MNNDNTEVLE…KYWQDEDQSI (90 aa)) is domain I, interacts with DnaA modulators. A domain II region spans residues 90–126 (ICSVDICVVSNQDPNLLVDIKDRVDRGIKGNCDNVSS). Residues 127–345 (PLDPRFTFDN…GALNKVVAHS (219 aa)) form a domain III, AAA+ region region. ATP is bound by residues Gly-173, Gly-175, Lys-176, and Thr-177. Residues 346-464 (SLVGCSITLD…DINLLNRMLR (119 aa)) are domain IV, binds dsDNA.

Belongs to the DnaA family. In terms of assembly, oligomerizes as a right-handed, spiral filament on DNA at oriC.

It is found in the cytoplasm. In terms of biological role, plays an essential role in the initiation and regulation of chromosomal replication. ATP-DnaA binds to the origin of replication (oriC) to initiate formation of the DNA replication initiation complex once per cell cycle. Binds the DnaA box (a 9 base pair repeat at the origin) and separates the double-stranded (ds)DNA. Forms a right-handed helical filament on oriC DNA; dsDNA binds to the exterior of the filament while single-stranded (ss)DNA is stabiized in the filament's interior. The ATP-DnaA-oriC complex binds and stabilizes one strand of the AT-rich DNA unwinding element (DUE), permitting loading of DNA polymerase. After initiation quickly degrades to an ADP-DnaA complex that is not apt for DNA replication. Binds acidic phospholipids. The chain is Chromosomal replication initiator protein DnaA from Ehrlichia ruminantium (strain Gardel).